The following is a 221-amino-acid chain: MDNCELVGSRIRLGLDMDGVLFDFDSKIMDKFAEMGIQFTDVKEMSSAVEFDKSIKQRHREIYHVPGFFANLPPIKGAVNAYKYLKSLTDINNNKIFEIFIVSTPSFRNQTCCIDKINDLNKYFGPELLEKVFFCRDKTLVNLDILIDDKPEIRGFNGSSECLSDSNSVTNKMSFQHIRFHSDMYKYSDDVPIINNWIDGTYIDVVKNVCVDKNLLREVVV.

Mg(2+)-binding residues include Asp-16 and Asp-18. Asp-18 (nucleophile) is an active-site residue. Residues Asp-18, Ser-103, and Lys-138 each contribute to the phosphate site. Asp-149 is a binding site for Mg(2+).

This sequence belongs to the 5'(3')-deoxyribonucleotidase family. Requires Mg(2+) as cofactor.

Its function is as follows. Dephosphorylates the 5' and 2'(3')-phosphates of deoxyribonucleotides. This is Putative 5'(3')-deoxyribonucleotidase R824 from Acanthamoeba polyphaga mimivirus (APMV).